A 1192-amino-acid chain; its full sequence is Probable phospholipid-transporting ATPase IM (1192 aa).

The Cytoplasmic segment spans residues 1–44 (MFCSEKKLREVERIVKANDREYNEKFQYADNRIHTSKYNILTFL). The helical transmembrane segment at 45 to 66 (PINLFEQFQRVANAYFLCLLIL) threads the bilayer. Residues 67–72 (QLIPEI) are Exoplasmic loop-facing. Residues 73-92 (SSLTWFTTIVPLVLVITMTA) traverse the membrane as a helical segment. At 93–276 (VKDATDDYFR…TSIDRLMNTL (184 aa)) the chain is on the cytoplasmic side. The chain crosses the membrane as a helical span at residues 277-298 (VLWIFGFLICLGIILAIGNSIW). Topologically, residues 299–327 (ESQTGDQFRTFLFWNEGEKSSVFSGFLTF) are exoplasmic loop. Residues 328–349 (WSYIIILNTVVPISLYVSVEVI) form a helical membrane-spanning segment. The Cytoplasmic segment spans residues 350–871 (RLGHSYFINW…GRWSYFRMCK (522 aa)). The 4-aspartylphosphate intermediate role is filled by D392. ATP is bound by residues D392, K393, T394, E496, F537, K560, R594, T674, G675, D676, R789, and K795. D392 is a Mg(2+) binding site. Residue T394 coordinates Mg(2+). A Mg(2+)-binding site is contributed by D815. The ATP site is built by N818 and D819. D819 contacts Mg(2+). Residues 872-892 (FLCYFFYKNFAFTLVHFWFGF) traverse the membrane as a helical segment. At 893-904 (FCGFSAQTVYDQ) the chain is on the exoplasmic loop side. The chain crosses the membrane as a helical span at residues 905 to 924 (WFITLFNIVYTSLPVLAMGI). Topologically, residues 925 to 954 (FDQDVSDQNSVDCPQLYKPGQLNLLFNKRK) are cytoplasmic. The helical transmembrane segment at 955–976 (FFICVLHGIYTSLVLFFIPYGA) threads the bilayer. At 977–990 (FYNVAGEDGQHIAD) the chain is on the exoplasmic loop side. A helical membrane pass occupies residues 991–1013 (YQSFAVTMATSLVIVVSVQIALD). At 1014 to 1019 (TSYWTF) the chain is on the cytoplasmic side. A helical transmembrane segment spans residues 1020 to 1040 (INHVFIWGSIAIYFSILFTMH). The Exoplasmic loop segment spans residues 1041-1060 (SNGIFGIFPNQFPFVGNARH). A helical membrane pass occupies residues 1061-1085 (SLTQKCIWLVILLTTVASVMPVVAF). The Cytoplasmic segment spans residues 1086–1192 (RFLKVDLYPT…SFSQDKTVKL (107 aa)). Basic residues predominate over residues 1104-1125 (QKAQKKARPPSSRRPRTRRSSS). 2 disordered regions span residues 1104 to 1130 (QKAQ…RSGY) and 1143 to 1163 (TSGK…EKTH).

The protein belongs to the cation transport ATPase (P-type) (TC 3.A.3) family. Type IV subfamily. In terms of assembly, component of a P4-ATPase flippase complex which consists of a catalytic alpha subunit and an accessory beta subunit. Interacts with beta subunits TMEM30A and TMEM30B. Requires Mg(2+) as cofactor. As to expression, ubiquitously expressed at moderate levels.

It is found in the cell membrane. The protein localises to the golgi apparatus. The catalysed reaction is ATP + H2O + phospholipidSide 1 = ADP + phosphate + phospholipidSide 2.. In terms of biological role, component of a P4-ATPase flippase complex which catalyzes the hydrolysis of ATP coupled to the transport of aminophospholipids from the outer to the inner leaflet of various membranes and ensures the maintenance of asymmetric distribution of phospholipids. Phospholipid translocation also seems to be implicated in vesicle formation and in uptake of lipid signaling molecules. The protein is Probable phospholipid-transporting ATPase IM (ATP8B4) of Homo sapiens (Human).